The sequence spans 535 residues: Flavin-containing monooxygenase iboF (535 aa).

The signal sequence occupies residues 1 to 24; it reads MFSLRPTALVSLSVVLFSIQETLS. An FAD-binding site is contributed by 60 to 65; the sequence is GAGPSG. Asn-134, Asn-243, and Asn-300 each carry an N-linked (GlcNAc...) asparagine glycan. 307 to 312 is a binding site for NADP(+); sequence GAAASG. N-linked (GlcNAc...) asparagine glycans are attached at residues Asn-356, Asn-382, and Asn-410.

Belongs to the FMO family. It depends on FAD as a cofactor.

The protein operates within secondary metabolite biosynthesis. In terms of biological role, flavin-containing monooxygenase; part of the gene cluster that mediates the biosynthesis of the psychoactive metabolites ibotenic acid and muscimol. The first committed step is glutamate hydroxylation by the 2-oxoglutarate-dependent dioxygenase iboH, and the last step is decarboxylation of ibotenic acid to muscimol by the decarboxylase iboD. The order of the intermediate reactions is somewhat ambiguous. IboA likely activates the carboxylic acid at position 5 to introduce an amide bond, and the flavin monooxygenase iboF generates the N-O bond. There are several options for the latter step. One option is that iboF directly hydroxylates the amide nitrogen formed by iboA to produce a hydroxamic acid species. Another option is that iboF hydroxylates an external N-containing compound, whose resulting N-O bond is subsequently introduced into the hydroxyglutamate scaffold. The paralogous PLP-dependent cystathionine gamma-synthase-like enzymes iboG1 and iboG2 are likely involved in substitution of the OH group at position 3 by the O-N moiety. The first cyclic intermediate is most probably tricholomic acid which is likely desaturated to ibotenic acid by the cytochrome P450 monooxygenase iboC. The protein is Flavin-containing monooxygenase iboF of Amanita muscaria (strain Koide BX008).